Reading from the N-terminus, the 328-residue chain is Methionine import ATP-binding protein MetN 1 (328 aa).

The ABC transporter domain maps to isoleucine 2–leucine 241. Glycine 38–serine 45 contacts ATP.

It belongs to the ABC transporter superfamily. Methionine importer (TC 3.A.1.24) family. The complex is composed of two ATP-binding proteins (MetN), two transmembrane proteins (MetI) and a solute-binding protein (MetQ).

It is found in the cell inner membrane. It carries out the reaction L-methionine(out) + ATP + H2O = L-methionine(in) + ADP + phosphate + H(+). The enzyme catalyses D-methionine(out) + ATP + H2O = D-methionine(in) + ADP + phosphate + H(+). Its function is as follows. Part of the ABC transporter complex MetNIQ involved in methionine import. Responsible for energy coupling to the transport system. The protein is Methionine import ATP-binding protein MetN 1 of Yersinia pestis bv. Antiqua (strain Nepal516).